The following is a 469-amino-acid chain: Interstitial collagenase (469 aa).

Positions 1-19 are cleaved as a signal peptide; it reads MFSLLLLLLLLCNTGSHGF. A propeptide spans 20 to 99 (activation peptide); sequence PAATSETQEQ…PRCGVPDVAE (80 aa). A Phosphoserine modification is found at S57. The Cysteine switch signature appears at 90–97; it reads PRCGVPDV. C92 contributes to the Zn(2+) binding site. N120 carries an N-linked (GlcNAc...) asparagine glycan. Ca(2+)-binding residues include D124 and D158. Zn(2+) is bound by residues H168 and D170. Residues D175, G176, G178, and N180 each contribute to the Ca(2+) site. H183 provides a ligand contact to Zn(2+). Residues G190, G192, and D194 each contribute to the Ca(2+) site. H196 lines the Zn(2+) pocket. 3 residues coordinate Ca(2+): D198, E199, and E201. H218 is a Zn(2+) binding site. E219 is a catalytic residue. Zn(2+)-binding residues include H222 and H228. T274 is modified (phosphothreonine). Hemopexin repeat units follow at residues 275–324, 325–371, 374–422, and 423–466; these read PQVC…WPQV, PNGL…FGFP, VKNI…FPGI, and GNKV…WFNC. An intrachain disulfide couples C278 to C466. The Ca(2+) site is built by D285 and Q329. Position 360 is a phosphotyrosine; by PKDCC (Y360). Ca(2+)-binding residues include D378 and D427.

This sequence belongs to the peptidase M10A family. The cofactor is Ca(2+). Requires Zn(2+) as cofactor. In terms of processing, undergoes autolytic cleavage to produce a N-terminal fragment having reduced collagenolytic activity. Tyrosine phosphorylated in platelets by PKDCC/VLK.

It is found in the secreted. The protein localises to the extracellular space. The protein resides in the extracellular matrix. The enzyme catalyses Cleavage of the triple helix of collagen at about three-quarters of the length of the molecule from the N-terminus, at 775-Gly-|-Ile-776 in the alpha1(I) chain. Cleaves synthetic substrates and alpha-macroglobulins at bonds where P1' is a hydrophobic residue.. Its activity is regulated as follows. Can be activated without removal of the activation peptide. Its function is as follows. Cleaves collagens of types I, II, and III at one site in the helical domain. Also cleaves collagens of types VII and X. This chain is Interstitial collagenase (MMP1), found in Sus scrofa (Pig).